Consider the following 112-residue polypeptide: Macrodomain Ori protein (112 aa).

The disordered stretch occupies residues 91-112 (FHTLSGGKPQVEGAEDYTDSDD). The span at 103–112 (GAEDYTDSDD) shows a compositional bias: acidic residues.

It belongs to the MaoP family.

Involved in the organization of the Ori region of the chromosome into a macrodomain (MD). It constrains DNA mobility in the Ori macrodomain and limits long-distance DNA interactions with other chromosomal regions. The polypeptide is Macrodomain Ori protein (Escherichia coli O157:H7).